The following is a 648-amino-acid chain: DNA mismatch repair protein MutL (648 aa).

Residues 336–443 (ERPFEPSSPQ…SGSAGESRAR (108 aa)) form a disordered region. A compositionally biased stretch (polar residues) spans 370–381 (SPESKTHSTWNE). Positions 383–410 (SRVDTSRAETSRESRIDSPLGERTRDIA) are enriched in basic and acidic residues.

Belongs to the DNA mismatch repair MutL/HexB family.

Functionally, this protein is involved in the repair of mismatches in DNA. It is required for dam-dependent methyl-directed DNA mismatch repair. May act as a 'molecular matchmaker', a protein that promotes the formation of a stable complex between two or more DNA-binding proteins in an ATP-dependent manner without itself being part of a final effector complex. This chain is DNA mismatch repair protein MutL, found in Shewanella sp. (strain ANA-3).